The sequence spans 339 residues: Ketol-acid reductoisomerase (NADP(+)) (339 aa).

The KARI N-terminal Rossmann domain maps to 1-182; it reads MRVYYDRDAD…GGGRAGIIET (182 aa). Residues 24–27, Arg-48, Ser-51, Thr-53, and 83–86 each bind NADP(+); these read YGSQ and DELQ. His-108 is a catalytic residue. An NADP(+)-binding site is contributed by Gly-134. Residues 183–328 form the KARI C-terminal knotted domain; sequence TFKEECETDL…AKLRGMMPWI (146 aa). 4 residues coordinate Mg(2+): Asp-191, Glu-195, Glu-227, and Glu-231. Residue Ser-252 participates in substrate binding.

It belongs to the ketol-acid reductoisomerase family. Requires Mg(2+) as cofactor.

It catalyses the reaction (2R)-2,3-dihydroxy-3-methylbutanoate + NADP(+) = (2S)-2-acetolactate + NADPH + H(+). It carries out the reaction (2R,3R)-2,3-dihydroxy-3-methylpentanoate + NADP(+) = (S)-2-ethyl-2-hydroxy-3-oxobutanoate + NADPH + H(+). It participates in amino-acid biosynthesis; L-isoleucine biosynthesis; L-isoleucine from 2-oxobutanoate: step 2/4. It functions in the pathway amino-acid biosynthesis; L-valine biosynthesis; L-valine from pyruvate: step 2/4. Its function is as follows. Involved in the biosynthesis of branched-chain amino acids (BCAA). Catalyzes an alkyl-migration followed by a ketol-acid reduction of (S)-2-acetolactate (S2AL) to yield (R)-2,3-dihydroxy-isovalerate. In the isomerase reaction, S2AL is rearranged via a Mg-dependent methyl migration to produce 3-hydroxy-3-methyl-2-ketobutyrate (HMKB). In the reductase reaction, this 2-ketoacid undergoes a metal-dependent reduction by NADPH to yield (R)-2,3-dihydroxy-isovalerate. This is Ketol-acid reductoisomerase (NADP(+)) from Methylorubrum extorquens (strain CM4 / NCIMB 13688) (Methylobacterium extorquens).